We begin with the raw amino-acid sequence, 1213 residues long: A disintegrin and metalloproteinase with thrombospondin motifs 19 (1213 aa).

The signal sequence occupies residues 1–27 (MGKNREMRLTHICCCCLLYQLGFLSNG). The propeptide occupies 28-322 (IVSELQFAPD…KIAESGRGKR (295 aa)). Disordered stretches follow at residues 49-161 (WRRE…PPPA) and 192-215 (FLAPRFAVEQRPNPGPGPTGAASA). Gly residues predominate over residues 52–71 (EPVDPAGGSGGSADPGWVRG). Over residues 110–119 (RPPPPSEGEE) the composition is skewed to acidic residues. The segment covering 120-139 (DEELESQELPRGSSGAAALS) has biased composition (low complexity). Residues 140–155 (PGAPASWQPPPPPQPP) are compositionally biased toward pro residues. Asn-266 carries N-linked (GlcNAc...) asparagine glycosylation. A Cysteine switch motif is present at residues 298 to 305 (HYCGIISD). Cys-300 contacts Zn(2+). The region spanning 331–551 (YNIETVVVAD…KASNCLLQTN (221 aa)) is the Peptidase M12B domain. 11 disulfides stabilise this stretch: Cys-407-Cys-472, Cys-447-Cys-454, Cys-466-Cys-546, Cys-505-Cys-530, Cys-575-Cys-599, Cys-586-Cys-607, Cys-594-Cys-626, Cys-620-Cys-631, Cys-651-Cys-686, Cys-655-Cys-691, and Cys-666-Cys-676. His-488 provides a ligand contact to Zn(2+). Residue Glu-489 is part of the active site. Zn(2+) contacts are provided by His-492 and His-498. The Disintegrin domain occupies 552 to 639 (PQSVNSVMVP…ECTSRTSAPE (88 aa)). The region spanning 640–692 (HLAGEWSLWSPCSRTCSAGISSRERKCPGLDSEARDCNGPRKQYRICENPPCP) is the TSP type-1 1 domain. The interval 797–920 (IIKGDFNHTR…PENQSSKAPE (124 aa)) is spacer. Residues Asn-803, Asn-913, Asn-955, and Asn-1015 are each glycosylated (N-linked (GlcNAc...) asparagine). 4 consecutive TSP type-1 domains span residues 921–981 (PLFM…NEQP), 982–1043 (CQTR…QDCM), 1045–1089 (VWEA…EDCE), and 1093–1150 (KCYV…QPCN). Cystine bridges form between Cys-994-Cys-1037, Cys-998-Cys-1042, and Cys-1009-Cys-1026. Residues 1166–1205 (LTFKCLGDQWPVYCRVIREKNLCQDMRWYQRCCETCRDFY) enclose the PLAC domain.

The cofactor is Zn(2+). The precursor is cleaved by a furin endopeptidase. In terms of processing, glycosylated. Can be O-fucosylated by POFUT2 on a serine or a threonine residue found within the consensus sequence C1-X(2)-(S/T)-C2-G of the TSP type-1 repeat domains where C1 and C2 are the first and second cysteine residue of the repeat, respectively. Fucosylated repeats can then be further glycosylated by the addition of a beta-1,3-glucose residue by the glucosyltransferase, B3GALTL. Fucosylation mediates the efficient secretion of ADAMTS family members. Can also be C-glycosylated with one or two mannose molecules on tryptophan residues within the consensus sequence W-X-X-W of the TPRs, and N-glycosylated. These other glycosylations can also facilitate secretion. In terms of tissue distribution, expressed in fetal lung, but not in any adult tissues examined. Expression was detected in an osteosarcoma cDNA library.

Its subcellular location is the secreted. It localises to the extracellular space. The protein resides in the extracellular matrix. The chain is A disintegrin and metalloproteinase with thrombospondin motifs 19 (ADAMTS19) from Homo sapiens (Human).